The chain runs to 533 residues: Malate synthase A (533 aa).

Arg166 functions as the Proton acceptor in the catalytic mechanism. Asp447 functions as the Proton donor in the catalytic mechanism.

This sequence belongs to the malate synthase family.

It is found in the cytoplasm. The catalysed reaction is glyoxylate + acetyl-CoA + H2O = (S)-malate + CoA + H(+). Its pathway is carbohydrate metabolism; glyoxylate cycle; (S)-malate from isocitrate: step 2/2. The polypeptide is Malate synthase A (aceB) (Escherichia coli (strain K12)).